A 251-amino-acid polypeptide reads, in one-letter code: DNA polymerase sliding clamp 2 (251 aa).

The protein belongs to the PCNA family. As to quaternary structure, heterotrimer. The subunits circularize to form a toroid; DNA passes through its center. Replication factor C (RFC) is required to load the toroid on the DNA.

Functionally, sliding clamp subunit that acts as a moving platform for DNA processing. Responsible for tethering the catalytic subunit of DNA polymerase and other proteins to DNA during high-speed replication. This Aeropyrum pernix (strain ATCC 700893 / DSM 11879 / JCM 9820 / NBRC 100138 / K1) protein is DNA polymerase sliding clamp 2.